An 82-amino-acid chain; its full sequence is Acyl carrier protein (82 aa).

One can recognise a Carrier domain in the interval 3–77 (SSIFDKVQNI…QAIEFIQHAI (75 aa)). Ser37 bears the O-(pantetheine 4'-phosphoryl)serine mark.

It belongs to the acyl carrier protein (ACP) family. Post-translationally, 4'-phosphopantetheine is transferred from CoA to a specific serine of apo-ACP by AcpS. This modification is essential for activity because fatty acids are bound in thioester linkage to the sulfhydryl of the prosthetic group.

Its subcellular location is the plastid. The protein resides in the chloroplast. Its pathway is lipid metabolism; fatty acid biosynthesis. Carrier of the growing fatty acid chain in fatty acid biosynthesis. This Gracilaria tenuistipitata var. liui (Red alga) protein is Acyl carrier protein.